We begin with the raw amino-acid sequence, 453 residues long: 5-hydroxytryptamine receptor 1 (453 aa).

Residues 1-36 lie on the Extracellular side of the membrane; sequence MKSLKSSTHDVPHPEHVVWAPPAYDEQHHLFFSHGT. The helical transmembrane segment at 37–57 threads the bilayer; sequence VLIGIVGSLIITVAVVGNVLV. Residues 58–74 are Cytoplasmic-facing; sequence CLAIFTEPILSHSKSNF. Residues 75–94 traverse the membrane as a helical segment; that stretch reads FIVSLAVADLLLALLVMTFA. Over 95 to 110 the chain is Extracellular; that stretch reads LVNDMYGYWLFGETFC. A disulfide bridge links C110 with C225. The chain crosses the membrane as a helical span at residues 111–133; the sequence is FIWMSADVMCETASIFSICVISY. Residues 134 to 153 are Cytoplasmic-facing; sequence DRLKQVQKPLHYEEFMTTTR. Residues 154–175 traverse the membrane as a helical segment; it reads ALLIIACLWICSFVLSFVPIFL. The Extracellular segment spans residues 176 to 223; the sequence is EWHELSVEEIKAIFKDNKTEKEKALEAHNFSSALNQTLGDNQKSNAKH. The chain crosses the membrane as a helical span at residues 224–244; sequence VCLFDVHFTYSVIYSFICFYV. Residues 245–301 lie on the Cytoplasmic side of the membrane; that stretch reads PCTLMLTNYLRLFLIAQTHQVRIRSLQMTNPPQLRGQGASSYRNQGTQGSKAARTLT. Residues 302–322 form a helical membrane-spanning segment; it reads IITGTFLACWLPFFIINPIAA. The Extracellular portion of the chain corresponds to 323 to 331; it reads ADEHLIPLE. The helical transmembrane segment at 332-352 threads the bilayer; the sequence is CFMVTIWLGYFNSSVNPIIYG. The Cytoplasmic portion of the chain corresponds to 353-453; it reads TSNSKFRAAF…VFDSDTAFSS (101 aa). Positions 397–428 are disordered; sequence DLSSSEHPSDACDTGRGKNSKGGDCATADPTK. Residues 403–412 are compositionally biased toward basic and acidic residues; it reads HPSDACDTGR.

It belongs to the G-protein coupled receptor 1 family. As to expression, reproductive system.

Its subcellular location is the cell membrane. Functionally, this is one of the several different receptors for 5-hydroxytryptamine (serotonin). 5-HT plays important roles in various behavioral and physiological processes in aplysia. These include feeding, locomotion, circadian rhythm, learning and memory, synaptic plasticity, and synaptic growth. This receptor is mediated by G proteins that stimulate phospholipase C. This Aplysia californica (California sea hare) protein is 5-hydroxytryptamine receptor 1 (5HTB1).